A 662-amino-acid chain; its full sequence is UvrABC system protein B (662 aa).

A Helicase ATP-binding domain is found at 25 to 182; that stretch reads KGIEKGEKFQ…KKLVEIQYER (158 aa). Position 38–45 (38–45) interacts with ATP; the sequence is GVTGSGKT. Residues 91–114 carry the Beta-hairpin motif; that stretch reads YYDYYQPEAYVAQSDTYIEKDASI. Residues 429–595 enclose the Helicase C-terminal domain; the sequence is QIDDLYTSIQ…TIIKDIREVI (167 aa). The UVR domain occupies 622-657; sequence DKLIEKYEEEMREAAQNLQFEKAAHLRDVIYKLKRD.

The protein belongs to the UvrB family. In terms of assembly, forms a heterotetramer with UvrA during the search for lesions. Interacts with UvrC in an incision complex.

It localises to the cytoplasm. Functionally, the UvrABC repair system catalyzes the recognition and processing of DNA lesions. A damage recognition complex composed of 2 UvrA and 2 UvrB subunits scans DNA for abnormalities. Upon binding of the UvrA(2)B(2) complex to a putative damaged site, the DNA wraps around one UvrB monomer. DNA wrap is dependent on ATP binding by UvrB and probably causes local melting of the DNA helix, facilitating insertion of UvrB beta-hairpin between the DNA strands. Then UvrB probes one DNA strand for the presence of a lesion. If a lesion is found the UvrA subunits dissociate and the UvrB-DNA preincision complex is formed. This complex is subsequently bound by UvrC and the second UvrB is released. If no lesion is found, the DNA wraps around the other UvrB subunit that will check the other stand for damage. The chain is UvrABC system protein B from Clostridium botulinum (strain 657 / Type Ba4).